We begin with the raw amino-acid sequence, 521 residues long: uncharacterized protein (521 aa).

Residues 1 to 25 form a disordered region; the sequence is MLQRSLGVNGRKLAMSARSAKRERK. 6 helical membrane passes run 68–88, 114–134, 160–180, 192–212, 290–310, and 399–419; these read GAVW…GAVL, VLIV…SLTV, VVLA…HTVG, VAVT…IYFL, ALLV…GWCW, and LLFW…CAQI.

It is found in the cell membrane. This is an uncharacterized protein from Mycobacterium bovis (strain ATCC BAA-935 / AF2122/97).